The sequence spans 219 residues: Ribosomal RNA small subunit methyltransferase I (219 aa).

It belongs to the methyltransferase superfamily. RsmI family.

The protein resides in the cytoplasm. The enzyme catalyses cytidine(1402) in 16S rRNA + S-adenosyl-L-methionine = 2'-O-methylcytidine(1402) in 16S rRNA + S-adenosyl-L-homocysteine + H(+). Catalyzes the 2'-O-methylation of the ribose of cytidine 1402 (C1402) in 16S rRNA. The chain is Ribosomal RNA small subunit methyltransferase I from Coprothermobacter proteolyticus (strain ATCC 35245 / DSM 5265 / OCM 4 / BT).